Here is a 186-residue protein sequence, read N- to C-terminus: Dirigent protein 4 (186 aa).

The N-terminal stretch at 1 to 20 is a signal peptide; sequence MGKNLGLVVSFYLCITFALG. Residues Asn-67, Asn-126, Asn-169, and Asn-180 are each glycosylated (N-linked (GlcNAc...) asparagine).

This sequence belongs to the plant dirigent protein family. In terms of assembly, homodimer.

The protein resides in the secreted. The protein localises to the extracellular space. Its subcellular location is the apoplast. In terms of biological role, dirigent proteins impart stereoselectivity on the phenoxy radical-coupling reaction, yielding optically active lignans from two molecules of coniferyl alcohol in the biosynthesis of lignans, flavonolignans, and alkaloids and thus plays a central role in plant secondary metabolism. This is Dirigent protein 4 (DIR4) from Arabidopsis thaliana (Mouse-ear cress).